Reading from the N-terminus, the 273-residue chain is Type II restriction enzyme HgiCII (273 aa).

This sequence belongs to the TdeIII type II restriction endonuclease family.

It carries out the reaction Endonucleolytic cleavage of DNA to give specific double-stranded fragments with terminal 5'-phosphates.. Its function is as follows. A P subtype restriction enzyme that recognizes the double-stranded sequence 5'-GGWCC-3' and cleaves after G-1. This chain is Type II restriction enzyme HgiCII, found in Herpetosiphon aurantiacus (Herpetosiphon giganteus).